The primary structure comprises 233 residues: Merozoite surface protein 1 (233 aa).

The signal sequence occupies residues 1-19 (MKIIFFLCSFLFFIINTQC). Polar residues predominate over residues 58 to 67 (SGTAVTTSTP). Residues 58–110 (SGTAVTTSTPGSKGSVASGGSGGSVASGGSVASGGSGNSRRTNPSDNSSDSDA) are disordered. Over residues 74–94 (ASGGSGGSVASGGSVASGGSG) the composition is skewed to gly residues. The span at 95-107 (NSRRTNPSDNSSD) shows a compositional bias: polar residues. Asn-104 carries N-linked (GlcNAc...) asparagine glycosylation.

As to quaternary structure, forms a complex composed of subunits p83, p30, p38, and p42 which remain non-covalently associated; the complex is formed at the merozoite surface prior to egress from host erythrocytes. Forms a complex composed of processed MSP1 subunits, MSP6 subunit p36 and MSP7; the complex is formed at the merozoite surface prior to egress from host erythrocytes. Within the complex, interacts (via subunit p38) with MSP6 subunit p36 and (via subunits p83, p30 and p38) with MSP7 (via subunit p22). Forms a complex composed of MSP1, MSP6, DBLMSP1 and DBLMSP2. Within the complex, interacts (via subunit p38) with DBLMSP1 and DBLMSP2. Forms a complex composed of MSP1, and rhoptry proteins RhopH3, RAP1 and CLAG9/RhopH3. Within the complex, interacts (via subunits p42 and p19) with RhopH3 (via C-terminus). Forms a complex composed of MSP1, MSP6, MSP7, MSP9 and MSP3; within the complex, MSP6 and MSP9 mediate the binding to the host erythrocyte. Interacts (via subunits p19 and p42) with MSP9; the interaction is direct; MSP1 subunits p19 or p42, and MSP9 form a co-ligand complex that interacts with host SLC4A1/Band 3 protein. May interact with PFD6. Interacts with host spectrin. In terms of processing, the p190 precursor is cleaved by SUB1 prior to merozoite egress into 4 subunits p83, p30, p38, and p42 which remain non-covalently associated. SUB1-mediated proteolytic cleavage occurs in an orderly manner; the first cleavage occurs at the p83/p30 site, followed by cleavage at the p30/p38 site, the last cleavage occurs at the p38/p42 site. The order of cleavage is essential for parasite viability. SUB1-mediated processing is essential for merozoite egress. In a second processing step during erythrocyte invasion, p42 is cleaved by SUB2 into p33 and p19; the latter remains attached to the merozoite surface via its GPI-anchor and stays on the surface during the subsequent ring stage.

The protein resides in the cell membrane. The protein localises to the secreted. Its function is as follows. During the asexual blood stage, involved in merozoite egress from host erythrocytes possibly via its interaction with the host cytoskeleton protein spectrin resulting in the destabilization of the host cytoskeleton and thus leading to erythrocyte cell membrane rupture. Involved in the binding to host erythrocytes and is required for host erythrocyte invasion. The protein is Merozoite surface protein 1 of Plasmodium falciparum (isolate CDC / Honduras).